The following is a 343-amino-acid chain: Heat-inducible transcription repressor HrcA (343 aa).

This sequence belongs to the HrcA family.

Functionally, negative regulator of class I heat shock genes (grpE-dnaK-dnaJ and groELS operons). Prevents heat-shock induction of these operons. The protein is Heat-inducible transcription repressor HrcA of Caldanaerobacter subterraneus subsp. tengcongensis (strain DSM 15242 / JCM 11007 / NBRC 100824 / MB4) (Thermoanaerobacter tengcongensis).